Here is a 396-residue protein sequence, read N- to C-terminus: 1-deoxy-D-xylulose 5-phosphate reductoisomerase (396 aa).

Residues Thr13, Gly14, Ser15, Ile16, and Asn127 each contribute to the NADPH site. Residue Lys128 participates in 1-deoxy-D-xylulose 5-phosphate binding. Glu129 contributes to the NADPH binding site. Asp153 is a Mn(2+) binding site. Ser154, Glu155, Ser184, and His207 together coordinate 1-deoxy-D-xylulose 5-phosphate. Glu155 contributes to the Mn(2+) binding site. Gly213 lines the NADPH pocket. 1-deoxy-D-xylulose 5-phosphate is bound by residues Ser220, Asn225, Lys226, and Glu229. Glu229 contributes to the Mn(2+) binding site.

The protein belongs to the DXR family. Mg(2+) serves as cofactor. Requires Mn(2+) as cofactor.

It carries out the reaction 2-C-methyl-D-erythritol 4-phosphate + NADP(+) = 1-deoxy-D-xylulose 5-phosphate + NADPH + H(+). The protein operates within isoprenoid biosynthesis; isopentenyl diphosphate biosynthesis via DXP pathway; isopentenyl diphosphate from 1-deoxy-D-xylulose 5-phosphate: step 1/6. Functionally, catalyzes the NADPH-dependent rearrangement and reduction of 1-deoxy-D-xylulose-5-phosphate (DXP) to 2-C-methyl-D-erythritol 4-phosphate (MEP). This chain is 1-deoxy-D-xylulose 5-phosphate reductoisomerase, found in Pseudomonas fluorescens (strain ATCC BAA-477 / NRRL B-23932 / Pf-5).